A 236-amino-acid chain; its full sequence is (5-formylfuran-3-yl)methyl phosphate synthase (236 aa).

The Schiff-base intermediate with substrate role is filled by lysine 27. The active-site Proton acceptor is lysine 85.

Belongs to the MfnB family.

It carries out the reaction 2 D-glyceraldehyde 3-phosphate = 4-(hydroxymethyl)-2-furancarboxaldehyde phosphate + phosphate + 2 H2O. The protein operates within cofactor biosynthesis; methanofuran biosynthesis. Its function is as follows. Catalyzes the formation of 4-(hydroxymethyl)-2-furancarboxaldehyde phosphate (4-HFC-P) from two molecules of glyceraldehyde-3-P (GA-3-P). The protein is (5-formylfuran-3-yl)methyl phosphate synthase of Methanococcus maripaludis (strain C5 / ATCC BAA-1333).